The sequence spans 300 residues: Phosphoribosylaminoimidazole-succinocarboxamide synthase (300 aa).

This sequence belongs to the SAICAR synthetase family.

The catalysed reaction is 5-amino-1-(5-phospho-D-ribosyl)imidazole-4-carboxylate + L-aspartate + ATP = (2S)-2-[5-amino-1-(5-phospho-beta-D-ribosyl)imidazole-4-carboxamido]succinate + ADP + phosphate + 2 H(+). It functions in the pathway purine metabolism; IMP biosynthesis via de novo pathway; 5-amino-1-(5-phospho-D-ribosyl)imidazole-4-carboxamide from 5-amino-1-(5-phospho-D-ribosyl)imidazole-4-carboxylate: step 1/2. The protein is Phosphoribosylaminoimidazole-succinocarboxamide synthase of Methylibium petroleiphilum (strain ATCC BAA-1232 / LMG 22953 / PM1).